We begin with the raw amino-acid sequence, 347 residues long: Holliday junction branch migration complex subunit RuvB (347 aa).

Residues 1 to 183 form a large ATPase domain (RuvB-L) region; sequence MSDERVVTPR…FGSVHRLEFY (183 aa). ATP-binding positions include leucine 22, arginine 23, glycine 64, lysine 67, threonine 68, serine 69, 130–132, arginine 173, tyrosine 183, and arginine 220; that span reads EDF. Threonine 68 contacts Mg(2+). Positions 184–254 are small ATPAse domain (RuvB-S); that stretch reads SVDALYEIVM…VARDALAKLE (71 aa). Positions 257–347 are head domain (RuvB-H); the sequence is HLGLDENDRR…NGAEQGRLWT (91 aa). DNA-binding residues include arginine 312 and arginine 317.

Belongs to the RuvB family. As to quaternary structure, homohexamer. Forms an RuvA(8)-RuvB(12)-Holliday junction (HJ) complex. HJ DNA is sandwiched between 2 RuvA tetramers; dsDNA enters through RuvA and exits via RuvB. An RuvB hexamer assembles on each DNA strand where it exits the tetramer. Each RuvB hexamer is contacted by two RuvA subunits (via domain III) on 2 adjacent RuvB subunits; this complex drives branch migration. In the full resolvosome a probable DNA-RuvA(4)-RuvB(12)-RuvC(2) complex forms which resolves the HJ.

It is found in the cytoplasm. It catalyses the reaction ATP + H2O = ADP + phosphate + H(+). In terms of biological role, the RuvA-RuvB-RuvC complex processes Holliday junction (HJ) DNA during genetic recombination and DNA repair, while the RuvA-RuvB complex plays an important role in the rescue of blocked DNA replication forks via replication fork reversal (RFR). RuvA specifically binds to HJ cruciform DNA, conferring on it an open structure. The RuvB hexamer acts as an ATP-dependent pump, pulling dsDNA into and through the RuvAB complex. RuvB forms 2 homohexamers on either side of HJ DNA bound by 1 or 2 RuvA tetramers; 4 subunits per hexamer contact DNA at a time. Coordinated motions by a converter formed by DNA-disengaged RuvB subunits stimulates ATP hydrolysis and nucleotide exchange. Immobilization of the converter enables RuvB to convert the ATP-contained energy into a lever motion, pulling 2 nucleotides of DNA out of the RuvA tetramer per ATP hydrolyzed, thus driving DNA branch migration. The RuvB motors rotate together with the DNA substrate, which together with the progressing nucleotide cycle form the mechanistic basis for DNA recombination by continuous HJ branch migration. Branch migration allows RuvC to scan DNA until it finds its consensus sequence, where it cleaves and resolves cruciform DNA. This Roseiflexus castenholzii (strain DSM 13941 / HLO8) protein is Holliday junction branch migration complex subunit RuvB.